Reading from the N-terminus, the 417-residue chain is uncharacterized protein (417 aa).

Transmembrane regions (helical) follow at residues 87–107 (LVVA…GYWI), 130–150 (IAGT…TPSV), 177–197 (FFIT…VYAA), and 202–222 (IIDT…LWPD). Positions 366-398 (APSAPAAAEHKATSSSNSSNSSPGSSNPTTAPT) are enriched in low complexity. The segment at 366–417 (APSAPAAAEHKATSSSNSSNSSPGSSNPTTAPTDKFRTGSPKTQPEKISAFW) is disordered.

The protein belongs to the YccS/YhfK family.

The protein resides in the cell membrane. This is an uncharacterized protein from Neisseria gonorrhoeae.